The sequence spans 549 residues: Cation/acetate symporter ActP (549 aa).

Helical transmembrane passes span 33-53 (WQAI…TYWA), 77-97 (LAIA…ALVF), 103-123 (GLIY…LIAE), 148-168 (ILSA…QMVG), 183-203 (IAVV…GMLA), 206-226 (WVQI…AFMV), 262-282 (ISAL…PHIL), 303-323 (GFMG…IMLV), 355-375 (LFLG…VAGL), 404-424 (VSKI…VLFE), 428-448 (IAFM…PIIL), 464-484 (GGWL…TIWV), and 493-513 (IFPY…GIWF).

Belongs to the sodium:solute symporter (SSF) (TC 2.A.21) family.

It is found in the cell inner membrane. Functionally, transports acetate. This is Cation/acetate symporter ActP from Escherichia coli O17:K52:H18 (strain UMN026 / ExPEC).